A 316-amino-acid polypeptide reads, in one-letter code: Pantothenate kinase (316 aa).

95–102 (GSVAVGKS) contributes to the ATP binding site.

It belongs to the prokaryotic pantothenate kinase family.

It is found in the cytoplasm. It catalyses the reaction (R)-pantothenate + ATP = (R)-4'-phosphopantothenate + ADP + H(+). It functions in the pathway cofactor biosynthesis; coenzyme A biosynthesis; CoA from (R)-pantothenate: step 1/5. The protein is Pantothenate kinase of Serratia proteamaculans (strain 568).